Here is a 453-residue protein sequence, read N- to C-terminus: Tryptophan dimethylallyltransferase cnsF (453 aa).

L-tryptophan is bound by residues 84-85 (IL) and E93. Positions 104, 190, and 192 each coordinate substrate. The L-tryptophan site is built by Y194 and R248. Substrate is bound by residues R261, K263, Y265, Q347, and Y349.

This sequence belongs to the tryptophan dimethylallyltransferase family. In terms of assembly, homodimer.

The catalysed reaction is L-tryptophan + dimethylallyl diphosphate = 4-(3-methylbut-2-enyl)-L-tryptophan + diphosphate. It participates in alkaloid biosynthesis. In terms of biological role, tryptophan dimethylallyltransferase; part of the gene cluster that mediates the biosynthesis of communesins, a prominent class of indole alkaloids with great potential as pharmaceuticals. Communesins are biosynthesized by the coupling of tryptamine and aurantioclavine, two building blocks derived from L-tryptophan. The L-tryptophan decarboxylase cnsB converts L-tryptophan to tryptamine, whereas the tryptophan dimethylallyltransferase cnsF converts L-tryptophan to 4-dimethylallyl tryptophan which is further transformed to aurantioclavine by the aurantioclavine synthase cnsA, probably aided by the catalase cnsD. The cytochrome P450 monooxygenase cnsC catalyzes the heterodimeric coupling between the two different indole moieties, tryptamine and aurantioclavine, to construct vicinal quaternary stereocenters and yield the heptacyclic communesin scaffold. The O-methyltransferase cnsE then methylates the communesin scaffold to produce communesin K, the simplest characterized communesin that contains the heptacyclic core. The dioxygenase cnsJ converts communesin K into communesin I. Acylation to introduce the hexadienyl group at position N16 of communesin I by the acyltransferase cnsK leads to the production of communesin B. The hexadienyl group is produced by the highly reducing polyketide synthase cnsI, before being hydrolytically removed from cnsI by the serine hydrolase cnsH, converted into hexadienyl-CoA by the CoA ligase cnsG, and then transferred to communesin I by cnsK. Surprisingly, cnsK may also be a promiscuous acyltransferase that can tolerate a range of acyl groups, including acetyl-, propionyl-, and butyryl-CoA, which lead to communesins A, G and H respectively. The roles of the alpha-ketoglutarate-dependent dioxygenases cnsM and cnsP have still to be determined. This chain is Tryptophan dimethylallyltransferase cnsF, found in Penicillium expansum (Blue mold rot fungus).